A 544-amino-acid polypeptide reads, in one-letter code: L-aspartate oxidase (544 aa).

Residues serine 17–alanine 20, lysine 39, serine 46–glycine 53, and aspartate 221 each bind FAD. Arginine 288 functions as the Proton donor/acceptor in the catalytic mechanism. FAD-binding positions include glutamate 373 and serine 389 to leucine 390.

It belongs to the FAD-dependent oxidoreductase 2 family. NadB subfamily. FAD serves as cofactor.

It localises to the cytoplasm. It carries out the reaction L-aspartate + O2 = iminosuccinate + H2O2. It participates in cofactor biosynthesis; NAD(+) biosynthesis; iminoaspartate from L-aspartate (oxidase route): step 1/1. Its function is as follows. Catalyzes the oxidation of L-aspartate to iminoaspartate, the first step in the de novo biosynthesis of NAD(+). The polypeptide is L-aspartate oxidase (Acinetobacter baylyi (strain ATCC 33305 / BD413 / ADP1)).